Reading from the N-terminus, the 275-residue chain is NH(3)-dependent NAD(+) synthetase (275 aa).

Position 46 to 53 (46 to 53) interacts with ATP; it reads GISGGQDS. D52 is a binding site for Mg(2+). Position 140 (R140) interacts with deamido-NAD(+). T160 is a binding site for ATP. Mg(2+) is bound at residue E165. Deamido-NAD(+)-binding residues include K173 and D180. Residues K189 and T211 each contribute to the ATP site. 260 to 261 lines the deamido-NAD(+) pocket; that stretch reads HK.

Belongs to the NAD synthetase family. In terms of assembly, homodimer.

The catalysed reaction is deamido-NAD(+) + NH4(+) + ATP = AMP + diphosphate + NAD(+) + H(+). It participates in cofactor biosynthesis; NAD(+) biosynthesis; NAD(+) from deamido-NAD(+) (ammonia route): step 1/1. In terms of biological role, catalyzes the ATP-dependent amidation of deamido-NAD to form NAD. Uses ammonia as a nitrogen source. This Escherichia coli O157:H7 protein is NH(3)-dependent NAD(+) synthetase.